The primary structure comprises 564 residues: Phosphomethylpyrimidine synthase (564 aa).

Residues N203, M232, Y261, H297, 317–319, 358–361, and E397 contribute to the substrate site; these read SRG and DGLR. H401 is a Zn(2+) binding site. Residue Y424 coordinates substrate. Zn(2+) is bound at residue H465. [4Fe-4S] cluster is bound by residues C541, C544, and C549.

It belongs to the ThiC family. It depends on [4Fe-4S] cluster as a cofactor.

It catalyses the reaction 5-amino-1-(5-phospho-beta-D-ribosyl)imidazole + S-adenosyl-L-methionine = 4-amino-2-methyl-5-(phosphooxymethyl)pyrimidine + CO + 5'-deoxyadenosine + formate + L-methionine + 3 H(+). The protein operates within cofactor biosynthesis; thiamine diphosphate biosynthesis. Functionally, catalyzes the synthesis of the hydroxymethylpyrimidine phosphate (HMP-P) moiety of thiamine from aminoimidazole ribotide (AIR) in a radical S-adenosyl-L-methionine (SAM)-dependent reaction. In Bacteroides fragilis (strain ATCC 25285 / DSM 2151 / CCUG 4856 / JCM 11019 / LMG 10263 / NCTC 9343 / Onslow / VPI 2553 / EN-2), this protein is Phosphomethylpyrimidine synthase.